A 214-amino-acid polypeptide reads, in one-letter code: ATP phosphoribosyltransferase (214 aa).

This sequence belongs to the ATP phosphoribosyltransferase family. Short subfamily. In terms of assembly, heteromultimer composed of HisG and HisZ subunits.

The protein resides in the cytoplasm. The enzyme catalyses 1-(5-phospho-beta-D-ribosyl)-ATP + diphosphate = 5-phospho-alpha-D-ribose 1-diphosphate + ATP. It participates in amino-acid biosynthesis; L-histidine biosynthesis; L-histidine from 5-phospho-alpha-D-ribose 1-diphosphate: step 1/9. Functionally, catalyzes the condensation of ATP and 5-phosphoribose 1-diphosphate to form N'-(5'-phosphoribosyl)-ATP (PR-ATP). Has a crucial role in the pathway because the rate of histidine biosynthesis seems to be controlled primarily by regulation of HisG enzymatic activity. The sequence is that of ATP phosphoribosyltransferase from Methylibium petroleiphilum (strain ATCC BAA-1232 / LMG 22953 / PM1).